Consider the following 252-residue polypeptide: Intraflagellar transport associated protein 2 (252 aa).

Residues 35-42 (GPPKAGKT) and 118-125 (WDVSGDKK) contribute to the GTP site.

This sequence belongs to the small GTPase superfamily. Rab family. Component of the IFT complex B composed of at least che-2, che-13, dyf-1, dyf-3, dyf-6, dyf-11, dyf-13, ift-20, ift-74, ift-81, ifta-2, osm-1, osm-5 and osm-6. As to expression, ciliated sensory neurons.

It is found in the cytoplasm. The protein localises to the cytoskeleton. The protein resides in the cilium axoneme. Its function is as follows. Component of the intraflagellar transport (IFT) complex B required for transport of proteins in the motile cilium. May be required for ciliary entrance and transport of specific ciliary cargo proteins such as che-3 which are related to motility. Regulates specific signaling activities in the cilia, such as the daf-2/insulin receptor-like transduction pathway. The sequence is that of Intraflagellar transport associated protein 2 from Caenorhabditis elegans.